A 211-amino-acid chain; its full sequence is Probable molybdenum cofactor guanylyltransferase (211 aa).

Residues 21 to 23 (LAG), lysine 33, aspartate 84, and aspartate 116 contribute to the GTP site. Position 116 (aspartate 116) interacts with Mg(2+).

It belongs to the MobA family. Requires Mg(2+) as cofactor.

It is found in the cytoplasm. It catalyses the reaction Mo-molybdopterin + GTP + H(+) = Mo-molybdopterin guanine dinucleotide + diphosphate. Transfers a GMP moiety from GTP to Mo-molybdopterin (Mo-MPT) cofactor (Moco or molybdenum cofactor) to form Mo-molybdopterin guanine dinucleotide (Mo-MGD) cofactor. This chain is Probable molybdenum cofactor guanylyltransferase, found in Rhodopirellula baltica (strain DSM 10527 / NCIMB 13988 / SH1).